We begin with the raw amino-acid sequence, 728 residues long: Catalase-peroxidase (728 aa).

Residues 91-218 (WHSAGTYRIA…LAAVQMGLIY (128 aa)) constitute a cross-link (tryptophyl-tyrosyl-methioninium (Trp-Tyr) (with M-244)). The active-site Proton acceptor is His-92. The tryptophyl-tyrosyl-methioninium (Tyr-Met) (with W-91) cross-link spans 218 to 244 (YVNPEGPDGNPDPVAAARDIRETFARM). Heme b is bound at residue His-259.

Belongs to the peroxidase family. Peroxidase/catalase subfamily. Homodimer or homotetramer. It depends on heme b as a cofactor. In terms of processing, formation of the three residue Trp-Tyr-Met cross-link is important for the catalase, but not the peroxidase activity of the enzyme.

The catalysed reaction is H2O2 + AH2 = A + 2 H2O. It carries out the reaction 2 H2O2 = O2 + 2 H2O. Bifunctional enzyme with both catalase and broad-spectrum peroxidase activity. The chain is Catalase-peroxidase from Burkholderia multivorans (strain ATCC 17616 / 249).